Reading from the N-terminus, the 187-residue chain is Large ribosomal subunit protein uL5 (187 aa).

The protein belongs to the universal ribosomal protein uL5 family. As to quaternary structure, part of the 50S ribosomal subunit; part of the 5S rRNA/L5/L18/L25 subcomplex. Contacts the 5S rRNA and the P site tRNA. Forms a bridge to the 30S subunit in the 70S ribosome.

This is one of the proteins that bind and probably mediate the attachment of the 5S RNA into the large ribosomal subunit, where it forms part of the central protuberance. In the 70S ribosome it contacts protein S13 of the 30S subunit (bridge B1b), connecting the 2 subunits; this bridge is implicated in subunit movement. Contacts the P site tRNA; the 5S rRNA and some of its associated proteins might help stabilize positioning of ribosome-bound tRNAs. The polypeptide is Large ribosomal subunit protein uL5 (Mycobacteroides abscessus (strain ATCC 19977 / DSM 44196 / CCUG 20993 / CIP 104536 / JCM 13569 / NCTC 13031 / TMC 1543 / L948) (Mycobacterium abscessus)).